A 180-amino-acid chain; its full sequence is MSRIGRKPIQIPDNVNVTVENRQIIVKGPKGQLSYSLPEGIGITIDNKTMLITRESDLSKQRALHGLARSLISNMVTGVSQGFTKALQIYGVGYRAQVSGNKIILNIGYSHPVEFVLPEGIKATVDEKQTTITLHGIDKQLVGQIAANLRAIRPPDAYKGKGIRYTDEVLKLKPGKTGKK.

The protein belongs to the universal ribosomal protein uL6 family. In terms of assembly, part of the 50S ribosomal subunit.

This protein binds to the 23S rRNA, and is important in its secondary structure. It is located near the subunit interface in the base of the L7/L12 stalk, and near the tRNA binding site of the peptidyltransferase center. This Thermodesulfovibrio yellowstonii (strain ATCC 51303 / DSM 11347 / YP87) protein is Large ribosomal subunit protein uL6.